Reading from the N-terminus, the 589-residue chain is Kelch-like protein 25 (589 aa).

Positions 46-114 (TDVTLWAGDR…AYSSRIAINE (69 aa)) constitute a BTB domain. One can recognise a BACK domain in the interval 149–250 (CLGMMLLSDA…LPSDCLQEAV (102 aa)). Kelch repeat units lie at residues 296–340 (TLLI…AIGC), 341–388 (KVYV…ELEN), 389–444 (CLYV…SAKL), 446–492 (LFVF…VLGS), 494–538 (IFIM…ASGN), and 539–585 (KLYV…STWK).

Component of the BCR(KLHL25) E3 ubiquitin ligase complex, at least composed of CUL3, KLHL25 and RBX1.

The protein operates within protein modification; protein ubiquitination. Its function is as follows. Substrate-specific adapter of a BCR (BTB-CUL3-RBX1) E3 ubiquitin ligase complex involved in various processes, such as translation homeostasis and lipid synthesis. The BCR(KLHL25) ubiquitin ligase complex acts by mediating ubiquitination of hypophosphorylated EIF4EBP1 (4E-BP1): ubiquitination and subsequent degradation of hypophosphorylated EIF4EBP1 (4E-BP1) probably serves as a homeostatic mechanism to maintain translation and prevent eIF4E inhibition when eIF4E levels are low. The BCR(KLHL25) complex does not target EIF4EBP1 (4E-BP1) when it is hyperphosphorylated or associated with eIF4E. The BCR(KLHL25) complex also acts as a regulator of lipid synthesis by mediating ubiquitination and degradation of ACLY, thereby inhibiting lipid synthesis. BCR(KLHL25)-mediated degradation of ACLY promotes fatty acid oxidation and is required for differentiation of inducible regulatory T (iTreg) cells. This is Kelch-like protein 25 from Homo sapiens (Human).